A 549-amino-acid chain; its full sequence is Lipase 4 (549 aa).

The signal sequence occupies residues 1–15 (MKLALVLSLIVSVAA). Residues Cys-75 and Cys-112 are joined by a disulfide bond. Ser-224 serves as the catalytic Acyl-ester intermediate. Cys-283 and Cys-292 form a disulfide bridge. Catalysis depends on Glu-356, which acts as the Charge relay system. Asn-366 carries an N-linked (GlcNAc...) asparagine glycan. Residue His-464 is the Charge relay system of the active site.

It belongs to the type-B carboxylesterase/lipase family.

The enzyme catalyses a triacylglycerol + H2O = a diacylglycerol + a fatty acid + H(+). In Diutina rugosa (Yeast), this protein is Lipase 4 (LIP4).